Here is a 557-residue protein sequence, read N- to C-terminus: 6-phosphofructo-2-kinase/fructose-2,6-bisphosphatase 2 (557 aa).

Low complexity predominate over residues 1-16 (MSENSTFSTEDSSSSS). The interval 1 to 21 (MSENSTFSTEDSSSSSYKPHA) is disordered. At Ser-2 the chain carries N-acetylserine. A 6-phosphofructo-2-kinase region spans residues 2–251 (SENSTFSTED…VYYLMNIHVH (250 aa)). Ser-32 carries the post-translational modification Phosphoserine; by PKA. 48-56 (GLPARGKTY) contacts ATP. Residues Arg-81 and Arg-105 each contribute to the beta-D-fructose 6-phosphate site. The active site involves Asp-131. Residues Thr-133 and Arg-139 each coordinate beta-D-fructose 6-phosphate. Cys-161 is a catalytic residue. 170–175 (NILEVK) contributes to the ATP binding site. The beta-D-fructose 6-phosphate site is built by Lys-175, Arg-196, and Tyr-200. Residues 252–557 (PRTIYLCRHG…PSMASLTLLS (306 aa)) form a fructose-2,6-bisphosphatase region. Arg-259 contacts beta-D-fructose 2,6-bisphosphate. Residue His-260 is the Tele-phosphohistidine intermediate of the active site. 2 residues coordinate beta-D-fructose 2,6-bisphosphate: Asn-266 and Gly-272. Glu-329 functions as the Proton donor/acceptor in the catalytic mechanism. The beta-D-fructose 2,6-bisphosphate site is built by Tyr-340, Arg-354, Lys-358, Tyr-369, Gln-395, and Arg-399. An ATP-binding site is contributed by 351-354 (FALR). ATP contacts are provided by residues 395–399 (QAVMR) and Tyr-431. Positions 449-495 (RDKPTHNFPKSQTPVRMRRNSFTPLSSSNTIRRPRNYSVGSRPLKPL) are disordered. The segment covering 456–479 (FPKSQTPVRMRRNSFTPLSSSNTI) has biased composition (polar residues). The residue at position 469 (Ser-469) is a Phosphoserine. A Phosphothreonine modification is found at Thr-471. Residue Thr-478 is modified to Phosphothreonine; by PKC. 2 positions are modified to phosphoserine: Ser-486 and Ser-496.

It in the C-terminal section; belongs to the phosphoglycerate mutase family. As to quaternary structure, homodimer. Forms a heterodimer with PFKFB3. Phosphorylation by AMPK stimulates activity.

The enzyme catalyses beta-D-fructose 2,6-bisphosphate + H2O = beta-D-fructose 6-phosphate + phosphate. The catalysed reaction is beta-D-fructose 6-phosphate + ATP = beta-D-fructose 2,6-bisphosphate + ADP + H(+). Phosphorylation results in the activation of the kinase activity. Its function is as follows. Synthesis and degradation of fructose 2,6-bisphosphate. The sequence is that of 6-phosphofructo-2-kinase/fructose-2,6-bisphosphatase 2 (Pfkfb2) from Rattus norvegicus (Rat).